We begin with the raw amino-acid sequence, 333 residues long: NADH dehydrogenase (ubiquinone) complex I, assembly factor 6 (333 aa).

A mitochondrion-targeting transit peptide spans methionine 1–arginine 44.

The protein belongs to the NDUFAF6 family.

It is found in the mitochondrion inner membrane. Its function is as follows. Involved in the assembly of mitochondrial NADH:ubiquinone oxidoreductase complex (complex I) at early stages. May play a role in the biogenesis of complex I subunit MT-ND1. The protein is NADH dehydrogenase (ubiquinone) complex I, assembly factor 6 (Ndufaf6) of Rattus norvegicus (Rat).